Here is a 219-residue protein sequence, read N- to C-terminus: Small ribosomal subunit protein uS3 (219 aa).

Positions 38 to 106 (IREYITARLK…RVHINILEVK (69 aa)) constitute a KH type-2 domain.

The protein belongs to the universal ribosomal protein uS3 family. As to quaternary structure, part of the 30S ribosomal subunit. Forms a tight complex with proteins S10 and S14.

Binds the lower part of the 30S subunit head. Binds mRNA in the 70S ribosome, positioning it for translation. The protein is Small ribosomal subunit protein uS3 of Bacillus cytotoxicus (strain DSM 22905 / CIP 110041 / 391-98 / NVH 391-98).